The primary structure comprises 295 residues: UDP-3-O-acyl-N-acetylglucosamine deacetylase (295 aa).

Residues H77, H233, and D237 each contribute to the Zn(2+) site. H260 functions as the Proton donor in the catalytic mechanism.

It belongs to the LpxC family. It depends on Zn(2+) as a cofactor.

The enzyme catalyses a UDP-3-O-[(3R)-3-hydroxyacyl]-N-acetyl-alpha-D-glucosamine + H2O = a UDP-3-O-[(3R)-3-hydroxyacyl]-alpha-D-glucosamine + acetate. The protein operates within glycolipid biosynthesis; lipid IV(A) biosynthesis; lipid IV(A) from (3R)-3-hydroxytetradecanoyl-[acyl-carrier-protein] and UDP-N-acetyl-alpha-D-glucosamine: step 2/6. Functionally, catalyzes the hydrolysis of UDP-3-O-myristoyl-N-acetylglucosamine to form UDP-3-O-myristoylglucosamine and acetate, the committed step in lipid A biosynthesis. In Solibacter usitatus (strain Ellin6076), this protein is UDP-3-O-acyl-N-acetylglucosamine deacetylase.